The sequence spans 225 residues: Protein-L-isoaspartate O-methyltransferase (225 aa).

The active site involves Ser-75.

This sequence belongs to the methyltransferase superfamily. L-isoaspartyl/D-aspartyl protein methyltransferase family.

Its subcellular location is the cytoplasm. The catalysed reaction is [protein]-L-isoaspartate + S-adenosyl-L-methionine = [protein]-L-isoaspartate alpha-methyl ester + S-adenosyl-L-homocysteine. In terms of biological role, catalyzes the methyl esterification of L-isoaspartyl residues in peptides and proteins that result from spontaneous decomposition of normal L-aspartyl and L-asparaginyl residues. It plays a role in the repair and/or degradation of damaged proteins. This Xanthomonas oryzae pv. oryzae (strain PXO99A) protein is Protein-L-isoaspartate O-methyltransferase.